Reading from the N-terminus, the 1020-residue chain is Protein SCAR3 (1020 aa).

3 disordered regions span residues 167–198, 351–382, and 802–827; these read NLSQ…DMSR, DEKP…LRKR, and DYLS…GRKE. A compositionally biased stretch (basic residues) spans 174–191; the sequence is KFQKDKKHCKMKKKKTSS. A compositionally biased stretch (basic and acidic residues) spans 365–382; the sequence is FHSKDNENDKSESGLRKR. The span at 802 to 814 shows a compositional bias: polar residues; the sequence is DYLSDNHSLSNSE. The 19-residue stretch at 954-972 folds into the WH2 domain; that stretch reads ETGDFLQQIRTQQFNLRPV.

It belongs to the SCAR/WAVE family. In terms of assembly, binds BRK1. Interacts with SPK1, ABI1, ABI2, ABI3 and ABI4. Expressed in expanding cotyledons, expanding leaves and expanding siliques containing developing embryos. Detected in unopened flower buds. Reduced expression in mature leaves and mature cotyledons.

Its subcellular location is the cytoplasm. It is found in the cytoskeleton. Involved in regulation of actin and microtubule organization. Part of a WAVE complex that activates the Arp2/3 complex. Regulates trichome branch positioning and expansion. In Arabidopsis thaliana (Mouse-ear cress), this protein is Protein SCAR3 (SCAR3).